A 148-amino-acid polypeptide reads, in one-letter code: MRCPKCSSEESKVVDSRQAEDAIRRRRVCESCGFRFTTFERIEEMPLLVIKKDDKREPFNREKIVRGLVRSAYKRPVSSEDIETTVANVERKIRQLDSNEVESDVIGEFVMQELAELDDITYIRFASVYRSFKDVSELEELLKNITKK.

Residues 3 to 32 (CPKCSSEESKVVDSRQAEDAIRRRRVCESC) fold into a zinc finger. Residues 47–137 (LLVIKKDDKR…VYRSFKDVSE (91 aa)) form the ATP-cone domain.

This sequence belongs to the NrdR family. It depends on Zn(2+) as a cofactor.

Its function is as follows. Negatively regulates transcription of bacterial ribonucleotide reductase nrd genes and operons by binding to NrdR-boxes. This chain is Transcriptional repressor NrdR, found in Lactococcus lactis subsp. lactis (strain IL1403) (Streptococcus lactis).